A 403-amino-acid polypeptide reads, in one-letter code: MNRYRYESIFFRYISSTRMILIICLLLGIGDMSAMGLKKDNSPIIPTLHPKGNENLRATLNEYKIPSPLFDTLDNSYETKHVIYTDNCSFAVLNPFGDPKYTLLSLLLMGRRKYDALVAWFVLGRACGRPIYLREYANCSTNEPFGTCKLKSLGWWDRRYAMTSYIDRDELKLIIAAPSRELSGLYTRLIIINGEPISSDILLTVKETCSFSRRGIKDNKLCKPFSFFVNGTTRLLDMVGTGTPRAHEENVKQWLERIGGKHLPIVVETSMQQVSNLPRSFRDSYFKSPDDDKYDDVKMTSATTNNITTSVDGYTGLTNRPEDFEKAPYITKRPIISVEEASSQSPKISTEKKSRTQIIISLVVLCVMFCFIVIGSGIWILRKHRKTVMYDRRRPSRRAYSRL.

Positions 1–34 (MNRYRYESIFFRYISSTRMILIICLLLGIGDMSA) are cleaved as a signal peptide. At 35 to 357 (MGLKKDNSPI…ISTEKKSRTQ (323 aa)) the chain is on the virion surface side. N-linked (GlcNAc...) asparagine; by host glycans are attached at residues asparagine 87 and asparagine 138. Disulfide bonds link cysteine 88/cysteine 209, cysteine 127/cysteine 222, and cysteine 139/cysteine 148. 2 N-linked (GlcNAc...) asparagine; by host glycosylation sites follow: asparagine 230 and asparagine 306. The helical transmembrane segment at 358 to 378 (IIISLVVLCVMFCFIVIGSGI) threads the bilayer. Topologically, residues 379–403 (WILRKHRKTVMYDRRRPSRRAYSRL) are intravirion.

This sequence belongs to the herpesviridae glycoprotein D family.

It localises to the virion membrane. Its function is as follows. Envelope glycoprotein that binds to host cell entry receptors, promoting the virus entry into host cells. May trigger fusion with host membrane, by recruiting the fusion machinery composed of gB and gH/gL. The polypeptide is Envelope glycoprotein D (MDV094) (Gallus gallus (Chicken)).